A 99-amino-acid chain; its full sequence is Integration host factor subunit alpha (99 aa).

The tract at residues 49–70 is disordered; sequence FGNFDLRDKNQRPGRNPKTGED.

This sequence belongs to the bacterial histone-like protein family. Heterodimer of an alpha and a beta chain.

This protein is one of the two subunits of integration host factor, a specific DNA-binding protein that functions in genetic recombination as well as in transcriptional and translational control. The chain is Integration host factor subunit alpha from Cronobacter sakazakii (strain ATCC BAA-894) (Enterobacter sakazakii).